A 169-amino-acid chain; its full sequence is Photosystem I assembly protein Ycf3 (169 aa).

TPR repeat units follow at residues 36 to 69, 73 to 106, and 121 to 154; these read AFTY…EIDP, SYIL…NPFL, and GEQA…TPGN.

This sequence belongs to the Ycf3 family.

The protein resides in the plastid. The protein localises to the chloroplast thylakoid membrane. In terms of biological role, essential for the assembly of the photosystem I (PSI) complex. May act as a chaperone-like factor to guide the assembly of the PSI subunits. In Cucumis sativus (Cucumber), this protein is Photosystem I assembly protein Ycf3.